The chain runs to 146 residues: D-aminoacyl-tRNA deacylase (146 aa).

The Gly-cisPro motif, important for rejection of L-amino acids signature appears at G137–P138.

It belongs to the DTD family. As to quaternary structure, homodimer.

The protein localises to the cytoplasm. It carries out the reaction glycyl-tRNA(Ala) + H2O = tRNA(Ala) + glycine + H(+). It catalyses the reaction a D-aminoacyl-tRNA + H2O = a tRNA + a D-alpha-amino acid + H(+). Its function is as follows. An aminoacyl-tRNA editing enzyme that deacylates mischarged D-aminoacyl-tRNAs. Also deacylates mischarged glycyl-tRNA(Ala), protecting cells against glycine mischarging by AlaRS. Acts via tRNA-based rather than protein-based catalysis; rejects L-amino acids rather than detecting D-amino acids in the active site. By recycling D-aminoacyl-tRNA to D-amino acids and free tRNA molecules, this enzyme counteracts the toxicity associated with the formation of D-aminoacyl-tRNA entities in vivo and helps enforce protein L-homochirality. The protein is D-aminoacyl-tRNA deacylase of Shouchella clausii (strain KSM-K16) (Alkalihalobacillus clausii).